We begin with the raw amino-acid sequence, 622 residues long: Chaperone protein HscA homolog (622 aa).

Belongs to the heat shock protein 70 family.

In terms of biological role, chaperone involved in the maturation of iron-sulfur cluster-containing proteins. Has a low intrinsic ATPase activity which is markedly stimulated by HscB. This chain is Chaperone protein HscA homolog, found in Burkholderia pseudomallei (strain K96243).